The chain runs to 335 residues: Glyceraldehyde-3-phosphate dehydrogenase 2 (335 aa).

NAD(+) contacts are provided by residues 13-14, aspartate 34, and methionine 79; that span reads RI. D-glyceraldehyde 3-phosphate-binding positions include 151 to 153, threonine 182, 211 to 212, and arginine 234; these read SCT and TG. Cysteine 152 acts as the Nucleophile in catalysis. An NAD(+)-binding site is contributed by asparagine 316.

This sequence belongs to the glyceraldehyde-3-phosphate dehydrogenase family. Homotetramer.

It is found in the cytoplasm. The enzyme catalyses D-glyceraldehyde 3-phosphate + phosphate + NAD(+) = (2R)-3-phospho-glyceroyl phosphate + NADH + H(+). The protein operates within carbohydrate degradation; glycolysis; pyruvate from D-glyceraldehyde 3-phosphate: step 1/5. Functionally, glyceraldehyde-3-phosphate dehydrogenase is a key enzyme in glycolysis that catalyzes the first step of the pathway by converting D-glyceraldehyde 3-phosphate (G3P) into 3-phospho-D-glyceroyl phosphate. The protein is Glyceraldehyde-3-phosphate dehydrogenase 2 (gapdh-2) of Danio rerio (Zebrafish).